The chain runs to 484 residues: Probable metalloprotease ARX1 (484 aa).

Belongs to the peptidase M24 family. In terms of assembly, component of the nucleoplasmic and cytoplasmic pre-60S ribosomal particles.

The protein resides in the cytoplasm. The protein localises to the nucleus. Its function is as follows. Probable metalloprotease involved in proper assembly of pre-ribosomal particles during the biogenesis of the 60S ribosomal subunit. Accompanies the pre-60S particles to the cytoplasm. The polypeptide is Probable metalloprotease ARX1 (ARX1) (Yarrowia lipolytica (strain CLIB 122 / E 150) (Yeast)).